The following is a 471-amino-acid chain: Arginine biosynthesis bifunctional protein ArgJ, mitochondrial (471 aa).

The transit peptide at 1–33 directs the protein to the mitochondrion; it reads MAMAGCNGFFLHQLRQPRLQLARQLGRTPSRAY. Thr201, Lys230, Thr241, Glu327, Asn466, and Thr471 together coordinate substrate. Catalysis depends on Thr241, which acts as the Nucleophile.

Belongs to the ArgJ family. Heterodimer of an alpha and a beta chain. Post-translationally, the alpha and beta chains are autoproteolytically processed from a single precursor protein within the mitochondrion.

The protein resides in the mitochondrion matrix. It carries out the reaction N(2)-acetyl-L-ornithine + L-glutamate = N-acetyl-L-glutamate + L-ornithine. The enzyme catalyses L-glutamate + acetyl-CoA = N-acetyl-L-glutamate + CoA + H(+). It participates in amino-acid biosynthesis; L-arginine biosynthesis; L-ornithine and N-acetyl-L-glutamate from L-glutamate and N(2)-acetyl-L-ornithine (cyclic): step 1/1. Its pathway is amino-acid biosynthesis; L-arginine biosynthesis; N(2)-acetyl-L-ornithine from L-glutamate: step 1/4. In terms of biological role, catalyzes two activities which are involved in the cyclic version of arginine biosynthesis: the synthesis of acetylglutamate from glutamate and acetyl-CoA, and of ornithine by transacetylation between acetylornithine and glutamate. This chain is Arginine biosynthesis bifunctional protein ArgJ, mitochondrial, found in Chaetomium globosum (strain ATCC 6205 / CBS 148.51 / DSM 1962 / NBRC 6347 / NRRL 1970) (Soil fungus).